The chain runs to 302 residues: tRNA pseudouridine synthase B (302 aa).

The active-site Nucleophile is the D38.

Belongs to the pseudouridine synthase TruB family. Type 1 subfamily.

It catalyses the reaction uridine(55) in tRNA = pseudouridine(55) in tRNA. Responsible for synthesis of pseudouridine from uracil-55 in the psi GC loop of transfer RNAs. The chain is tRNA pseudouridine synthase B from Ligilactobacillus salivarius (strain UCC118) (Lactobacillus salivarius).